We begin with the raw amino-acid sequence, 164 residues long: Lipoprotein signal peptidase (164 aa).

4 helical membrane passes run Trp12 to Gln32, Leu42 to Ala62, Trp70 to Ser90, and Ala102 to Val122. Active-site residues include Asp123 and Asp141. The helical transmembrane segment at Phe137 to Leu157 threads the bilayer.

It belongs to the peptidase A8 family.

It localises to the cell inner membrane. It carries out the reaction Release of signal peptides from bacterial membrane prolipoproteins. Hydrolyzes -Xaa-Yaa-Zaa-|-(S,diacylglyceryl)Cys-, in which Xaa is hydrophobic (preferably Leu), and Yaa (Ala or Ser) and Zaa (Gly or Ala) have small, neutral side chains.. Its pathway is protein modification; lipoprotein biosynthesis (signal peptide cleavage). In terms of biological role, this protein specifically catalyzes the removal of signal peptides from prolipoproteins. The sequence is that of Lipoprotein signal peptidase from Shigella flexneri serotype 5b (strain 8401).